Here is a 1136-residue protein sequence, read N- to C-terminus: MNSGYPLANDLQGSMKNTNYKDWLAMCENNQQYGVNPAAINSSSVSTALKVAGAILKFVNPPAGTVLTVLSAVLPILWPTNTPTPERVWNDFMTNTGNLIDQTVTAYVRTDANAKMTVVKDYLDQYTTKFNTWKREPNNQSYRTAVITQFNLTSAKLRETAVYFSNLVGYELLLLPIYAQVANFNLLLIRDGLINAQEWSLARSAGDQLYNTMVQYTKEYIAHSITWYNKGLDVLRNKSNGQWITFNDYKREMTIQVLDILALFASYDPRRYPADKIDNTKLSKTEFTREIYTALVESPSSKSIAALEAALTRDVHLFTWLKRVDFWTNTIYQDLRFLSANKIGFSYTNSSAMQESGIYGSSGFGSNLTHQIQLNSNVYKTSITDTSSPSNRVTKMDFYKIDGTLASYNSNITPTPEGLRTTFFGFSTNENTPNQPTVNDYTHILSYIKTDVIDYNSNRVSFAWTHKIVDPNNQIYTDAITQVPAVKSNFLNATAKVIKGPGHTGGDLVALTSNGTLSGRMEIQCKTSIFNDPTRSYGLRIRYAANSPIVLNVSYVLQGVSRGTTISTESTFSRPNNIIPTDLKYEEFRYKDPFDAIVPMRLSSNQLITIAIQPLNMTSNNQVIIDRIEIIPITQSVLDETENQNLESEREVVNALFTNDAKDALNIGTTDYDIDQAANLVECISEELYPKEKMLLLDEVKNAKQLSQSRNVLQNGDFESATLGWTTSDNITIQEDDPIFKGHYLHMSGARDIDGTIFPTYIFQKIDESKLKPYTRYLVRGFVGSSKDVELVVSRYGEEIDAIMNVPADLNYLYPSTFDCEGSNRCETSAVPANIGNTSDMLYSCQYDTGKKHVVCQDSHQFSFTIDTGALDTNENIGVWVMFKISSPDGYASLDNLEVIEEGPIDGEALSRVKHMEKKWNDQMEAKRSETQQAYDVAKQAIDALFTNVQDEALQFDTTLAQIQYAEYLVQSIPYVYNDWLSDVPGMNYDIYVELDARVAQARYLYDTRNIIKNGDFTQGVMGWHVTGNADVQQIDGVSVLVLSNWSAGVSQNVHLQHNHGYVLRVIAKKEGPGNGYVTLMDCEENQEKLTFTSCEEGYITKTVDVFPDTDRVRIEIGETEGSFYIESIELICMNE.

The segment at 84–282 (TPERVWNDFM…PADKIDNTKL (199 aa)) is domain I. A domain II region spans residues 283-466 (SKTEFTREIY…SNRVSFAWTH (184 aa)). Positions 467–641 (KIVDPNNQIY…PITQSVLDET (175 aa)) are domain III.

The protein belongs to the delta endotoxin family. As to quaternary structure, in the presence of micelles active toxin forms oligomers that can be fit into cryo-EM maps as trimers. Binds to host (A.gambiae) cadherin AgCad1 (also called BT-R3), probably on the cell surface. Activated toxin may bind its host AgCad1 receptor as a monomer, but also forms an oligomer that is not active. Requires Mg(2+) as cofactor. Post-translationally, treatment of recombinant protein with A.aegypti 3rd instar larvae midgut extract for 1 hour yields major bands of 72 and 45 kDa, the combined proteins are toxic to mosquitoes. Longer digestion, which removes the 72 kDa protein, yields a non-toxic preparation. Proteolysis by yields a 65 kDa toxic protein and 48 and 17 kDa fragments which are not toxic. In terms of tissue distribution, host (A.gambiae) larval midgut; binds to host brush border membranes, probably to cadherin-AgCad1 (Cad1, also called BT-R3).

It is found in the spore. With respect to regulation, toxic activity on Trichoplusia ni insect cells stably transfected with the AgCad1/BT-R3 receptor leads to oncosis, cell death characterized by cell swelling, membrane blebbing and depletion of energy reserves. Cell death is blocked by EDTA (but not EGTA) and is partially prevented by pretreatment with NF449 (inhibits G-s-alpha-60A and adenylyl cyclase, AC) and 2',5'-dideoxyadenosine 3'-diphosphate (ddADP, inhibits AC), while H-89 and PKAI 14-22 (both inhibit protein kinase A), ouabain (inhibits Na+/K+-ATPase) and a cell exocytosis inhibitor (Exo1) nearly completely prevent the action of the toxin in this system. The cAMP analog pCPT-cAMP and the AC activator FSK enhance toxicity. A pesticidal protein active against Aedes and Anopheles mosquito species; activity on Culex species is strain dependent. It remains toxic to permethrin-resistant strains of A.gambiae. Following activation of the protoxin by mosquito larvae midgut extract (or by chymotrypsin or trypsin treatment) it becomes insecticidal. Causes mosquito cell death by activating a host G-protein-coupled receptor which subsequently activates adenylyl cyclase and increases cAMP production. cAMP activates protein kinase A which sets off a series of downstream events which includes increased exocytosis (probably bringing more receptor to the cell membrane), Na+/K+-ATPase activation and eventual host cell death. Another group suggests that alkaline phosphatase serves as the insect receptor and that the protein forms pores in insect cell membranes. The sequence is that of Pesticidal crystal protein Cry4B protoxin from Bacillus thuringiensis subsp. israelensis.